The primary structure comprises 553 residues: Arylsulfatase K (553 aa).

Positions 1–16 (MLLLLVSVVAALALAA) are cleaved as a signal peptide. D40 and C80 together coordinate Ca(2+). C80 acts as the Nucleophile in catalysis. 3-oxoalanine (Cys) is present on C80. N-linked (GlcNAc...) asparagine glycosylation is present at N108. K128 provides a ligand contact to substrate. A glycan (N-linked (GlcNAc...) asparagine) is linked at N191. Residue H249 coordinates substrate. N260 carries N-linked (GlcNAc...) asparagine glycosylation. 2 residues coordinate Ca(2+): D311 and H312. N-linked (GlcNAc...) asparagine glycosylation is found at N373, N411, and N496. A disordered region spans residues 530–553 (SPLASSPTQSTSGSQPTLPQSTSG). Positions 534-553 (SSPTQSTSGSQPTLPQSTSG) are enriched in low complexity.

Belongs to the sulfatase family. Ca(2+) serves as cofactor. Post-translationally, the conversion to 3-oxoalanine (also known as C-formylglycine, FGly), of a serine or cysteine residue in prokaryotes and of a cysteine residue in eukaryotes, is critical for catalytic activity. The 75-kDa precursor undergoes proteolytic processing to yield a 23 kDa form. In terms of processing, N-glycosylated with both high mannose and complex type sugars.

The protein localises to the secreted. The protein resides in the lysosome. The enzyme catalyses an aryl sulfate + H2O = a phenol + sulfate + H(+). The catalysed reaction is Hydrolysis of the 2-sulfate groups of the 2-O-sulfo-D-glucuronate residues of chondroitin sulfate, heparin and heparitin sulfate.. Functionally, catalyzes the hydrolysis of pseudosubstrates such as p-nitrocatechol sulfate and p-nitrophenyl sulfate. Catalyzes the hydrolysis of the 2-sulfate groups of the 2-O-sulfo-D-glucuronate residues of chondroitin sulfate, heparin and heparitin sulfate. Acts selectively on 2-sulfoglucuronate and lacks activity against 2-sulfoiduronate. This Mus musculus (Mouse) protein is Arylsulfatase K (Arsk).